The sequence spans 141 residues: QVEGVVTLSQEDNGPTTVKVRLTGLTPGKHGFHLHEFGDTTNGCMSTGSHFNPKKLTHGAPEDDVRHAGDLGNIVAGSDGVAEATIVDNQIPLSGPDSVIGRALVVHELEDDLGKGGHELSLTTGNAGGRLACGVVGLTPI.

Residues His33, His35, and His50 each contribute to the Cu cation site. Cys44 and Cys133 are disulfide-bonded. Residues His50, His58, His67, and Asp70 each coordinate Zn(2+). A Cu cation-binding site is contributed by His107.

This sequence belongs to the Cu-Zn superoxide dismutase family. Homotetramer. It depends on Cu cation as a cofactor. Requires Zn(2+) as cofactor.

The protein resides in the plastid. It is found in the chloroplast. The catalysed reaction is 2 superoxide + 2 H(+) = H2O2 + O2. Destroys radicals which are normally produced within the cells and which are toxic to biological systems. The chain is Superoxide dismutase [Cu-Zn], chloroplastic (SODCP) from Pinus sylvestris (Scotch pine).